A 641-amino-acid polypeptide reads, in one-letter code: 1-deoxy-D-xylulose-5-phosphate synthase (641 aa).

Thiamine diphosphate is bound by residues H79 and 120–122 (AHS). D151 contributes to the Mg(2+) binding site. Thiamine diphosphate contacts are provided by residues 152 to 153 (GA), N180, Y290, and E372. N180 provides a ligand contact to Mg(2+).

This sequence belongs to the transketolase family. DXPS subfamily. Homodimer. Mg(2+) serves as cofactor. Requires thiamine diphosphate as cofactor.

The enzyme catalyses D-glyceraldehyde 3-phosphate + pyruvate + H(+) = 1-deoxy-D-xylulose 5-phosphate + CO2. It functions in the pathway metabolic intermediate biosynthesis; 1-deoxy-D-xylulose 5-phosphate biosynthesis; 1-deoxy-D-xylulose 5-phosphate from D-glyceraldehyde 3-phosphate and pyruvate: step 1/1. In terms of biological role, catalyzes the acyloin condensation reaction between C atoms 2 and 3 of pyruvate and glyceraldehyde 3-phosphate to yield 1-deoxy-D-xylulose-5-phosphate (DXP). In Bradyrhizobium sp. (strain ORS 278), this protein is 1-deoxy-D-xylulose-5-phosphate synthase.